Here is a 328-residue protein sequence, read N- to C-terminus: Carbonic anhydrase-related protein 11 (328 aa).

The N-terminal stretch at M1–A23 is a signal peptide. An Alpha-carbonic anhydrase domain is found at D33–R303. 3 N-linked (GlcNAc...) asparagine glycosylation sites follow: N118, N170, and N260. Residues L299–R328 form a disordered region. The segment covering L319–R328 has biased composition (basic and acidic residues).

The protein belongs to the alpha-carbonic anhydrase family.

The protein localises to the secreted. Functionally, does not have a catalytic activity. The polypeptide is Carbonic anhydrase-related protein 11 (CA11) (Pongo abelii (Sumatran orangutan)).